The sequence spans 356 residues: Biotin synthase (356 aa).

The segment at methionine 1–glutamate 28 is disordered. The Radical SAM core domain maps to glutamate 77–arginine 302. 3 residues coordinate [4Fe-4S] cluster: cysteine 92, cysteine 96, and cysteine 99. The [2Fe-2S] cluster site is built by cysteine 135, cysteine 168, cysteine 227, and arginine 297.

The protein belongs to the radical SAM superfamily. Biotin synthase family. Homodimer. The cofactor is [4Fe-4S] cluster. [2Fe-2S] cluster serves as cofactor.

The catalysed reaction is (4R,5S)-dethiobiotin + (sulfur carrier)-SH + 2 reduced [2Fe-2S]-[ferredoxin] + 2 S-adenosyl-L-methionine = (sulfur carrier)-H + biotin + 2 5'-deoxyadenosine + 2 L-methionine + 2 oxidized [2Fe-2S]-[ferredoxin]. It participates in cofactor biosynthesis; biotin biosynthesis; biotin from 7,8-diaminononanoate: step 2/2. In terms of biological role, catalyzes the conversion of dethiobiotin (DTB) to biotin by the insertion of a sulfur atom into dethiobiotin via a radical-based mechanism. The polypeptide is Biotin synthase (Arthrobacter sp. (strain FB24)).